The sequence spans 427 residues: Enolase (427 aa).

Q163 contributes to the (2R)-2-phosphoglycerate binding site. The Proton donor role is filled by E205. Mg(2+) contacts are provided by D242, E285, and D312. (2R)-2-phosphoglycerate-binding residues include K337, R366, S367, and K388. Residue K337 is the Proton acceptor of the active site.

This sequence belongs to the enolase family. Requires Mg(2+) as cofactor.

It localises to the cytoplasm. It is found in the secreted. The protein resides in the cell surface. It catalyses the reaction (2R)-2-phosphoglycerate = phosphoenolpyruvate + H2O. It functions in the pathway carbohydrate degradation; glycolysis; pyruvate from D-glyceraldehyde 3-phosphate: step 4/5. Functionally, catalyzes the reversible conversion of 2-phosphoglycerate (2-PG) into phosphoenolpyruvate (PEP). It is essential for the degradation of carbohydrates via glycolysis. In Bradyrhizobium diazoefficiens (strain JCM 10833 / BCRC 13528 / IAM 13628 / NBRC 14792 / USDA 110), this protein is Enolase.